The sequence spans 1671 residues: AF4/FMR2 family member lilli (1671 aa).

Disordered stretches follow at residues 53–79, 126–304, 393–599, 723–761, 774–1162, and 1185–1311; these read YSQN…QQGI, SAPG…EKDV, LAGE…SNKW, DSGT…QLPG, PTQS…TTPH, and KLTP…LQIG. The span at 70-79 shows a compositional bias: basic and acidic residues; sequence REKIERQQGI. Low complexity-rich tracts occupy residues 145–179 and 210–242; these read SLGH…QQQQ and PSSS…SSGG. The residue at position 416 (Thr-416) is a Phosphothreonine. Positions 424-437 are enriched in basic and acidic residues; the sequence is LKTEKNHSLEKQDS. Acidic residues predominate over residues 439–450; it reads LENDLELSESED. Phosphoserine is present on residues Ser-446 and Ser-448. The segment covering 459 to 479 has biased composition (low complexity); it reads SAGNSSNSSESDSSESGSESS. The segment covering 487-496 has biased composition (basic residues); that stretch reads HPNHQQHHHQ. 2 stretches are compositionally biased toward low complexity: residues 497-522 and 561-587; these read LQQQ…PQPL and PAGV…GSSS. Positions 588–599 are enriched in polar residues; the sequence is NKTPSPTESNKW. The span at 723 to 755 shows a compositional bias: low complexity; it reads DSGTSASGSSSSSSSSSDSAVGGEVVPMPGPGE. The span at 774–786 shows a compositional bias: polar residues; the sequence is PTQSQKAPPSNSV. The segment covering 800 to 810 has biased composition (basic residues); sequence QRQKKPRKKKA. Phosphoserine is present on residues Ser-819 and Ser-820. The a.T hook DNA-binding region spans 849–861; sequence KKGRGRPRKQQQS. Residues 858-896 are compositionally biased toward low complexity; sequence QQQSGGSGNLSSASAGSSSQTKGPTLTAAKKPLAKTPLA. Phosphoserine is present on residues Ser-869 and Ser-871. Residues 907–917 are compositionally biased toward polar residues; sequence SQSSSNGNTPT. Composition is skewed to low complexity over residues 947–963 and 988–1002; these read SSSA…SSSS and ALLG…SSGS. Over residues 1009 to 1020 the composition is skewed to polar residues; the sequence is SRSQVGSGQALA. Residues 1032-1058 show a composition bias toward low complexity; it reads SQHSQHLSSSECSSSSGGCTAVCSSSS. Basic and acidic residues predominate over residues 1063 to 1080; sequence EGRREKERERKPKSDKNK. A compositionally biased stretch (pro residues) spans 1120 to 1130; the sequence is QPPPPHAPPAA. The segment covering 1188–1203 has biased composition (polar residues); sequence PAQQNGHLTPKDQATN. Composition is skewed to basic and acidic residues over residues 1224 to 1241 and 1250 to 1280; these read EHPV…EAKF and FQLK…EQPP. Ser-1360 is modified (phosphoserine). Thr-1362 carries the phosphothreonine modification. Residues 1562 to 1581 show a composition bias toward low complexity; it reads NTPSSISPSNSVGSQGSGSN. The tract at residues 1562 to 1586 is disordered; the sequence is NTPSSISPSNSVGSQGSGSNTPPGR.

Belongs to the AF4 family.

It localises to the nucleus. In terms of biological role, has a role in transcriptional regulation. Acts in parallel with the Ras/MAPK and the PI3K/PKB pathways in the control of cell identity and cellular growth. Essential for regulation of the cytoskeleton and cell growth but not for cell proliferation or growth rate. Required specifically for the microtubule-based basal transport of lipid droplets. Plays a partially redundant function downstream of Raf in cell fate specification in the developing eye. Pair-rule protein that regulates embryonic cellularization, gastrulation and segmentation. This Drosophila yakuba (Fruit fly) protein is AF4/FMR2 family member lilli.